The sequence spans 576 residues: Sulfite reductase [NADPH] hemoprotein beta-component (576 aa).

[4Fe-4S] cluster-binding residues include Cys-435, Cys-441, Cys-480, and Cys-484. Cys-484 is a siroheme binding site.

It belongs to the nitrite and sulfite reductase 4Fe-4S domain family. Alpha(8)-beta(8). The alpha component is a flavoprotein, the beta component is a hemoprotein. Siroheme is required as a cofactor. It depends on [4Fe-4S] cluster as a cofactor.

The catalysed reaction is hydrogen sulfide + 3 NADP(+) + 3 H2O = sulfite + 3 NADPH + 4 H(+). Its pathway is sulfur metabolism; hydrogen sulfide biosynthesis; hydrogen sulfide from sulfite (NADPH route): step 1/1. Component of the sulfite reductase complex that catalyzes the 6-electron reduction of sulfite to sulfide. This is one of several activities required for the biosynthesis of L-cysteine from sulfate. This Yersinia pseudotuberculosis serotype IB (strain PB1/+) protein is Sulfite reductase [NADPH] hemoprotein beta-component.